The sequence spans 131 residues: MAKKKRTRGPKKEKRIVPVGVAHINSTFNNTIVTITDPEGNVLTWGSGGTAGFKGTKKGTPFAAQLAAEMAAKKAISEYGMKKVDVLVKGPGPGRETAIRALQAAGLEISLIKDVTPIPHNGCRPPRRRRV.

It belongs to the universal ribosomal protein uS11 family. As to quaternary structure, part of the 30S ribosomal subunit. Interacts with proteins S7 and S18. Binds to IF-3.

Located on the platform of the 30S subunit, it bridges several disparate RNA helices of the 16S rRNA. Forms part of the Shine-Dalgarno cleft in the 70S ribosome. The sequence is that of Small ribosomal subunit protein uS11 from Dictyoglomus turgidum (strain DSM 6724 / Z-1310).